Reading from the N-terminus, the 120-residue chain is Glycophorin-A (120 aa).

Pyrrolidone carboxylic acid is present on glutamine 1. The disordered stretch occupies residues 1–40; the sequence is QTIATGSPPIAGTSDLSTITSAATPTFTTEQDGREQGDGL. 2 O-linked (GalNAc...) threonine glycosylation sites follow: threonine 2 and threonine 5. Serine 7 carries O-linked (GalNAc...) serine glycosylation. Threonine 13 is a glycosylation site (O-linked (GalNAc...) threonine). Serine 17 carries an O-linked (GalNAc...) serine glycan. Residues 17-29 show a composition bias toward low complexity; sequence STITSAATPTFTT. Threonine 18 and threonine 20 each carry an O-linked (GalNAc...) threonine glycan. Serine 21 carries an O-linked (GalNAc...) serine glycan. 2 O-linked (GalNAc...) threonine glycosylation sites follow: threonine 24 and threonine 28. A helical transmembrane segment spans residues 50–72; it reads VITVIILGVMAGIIGIILLLAYV. Residues 78 to 120 are disordered; the sequence is KRPPADVPPPASTVPSADAPPPVSEDDETSLTSVETDYPGDSQ. The segment covering 82–100 has biased composition (pro residues); sequence ADVPPPASTVPSADAPPPV. Residues 107-120 show a composition bias toward polar residues; sequence SLTSVETDYPGDSQ. Serine 119 is modified (phosphoserine).

It belongs to the glycophorin-A family. Homodimer.

The protein localises to the membrane. Functionally, glycophorin A is the major intrinsic membrane sialoglycoprotein of the erythrocyte. Appears to be important for the function of SLC4A1 and is required for high activity of SLC4A1. May be involved in translocation of SLC4A1 to the plasma membrane. In Equus caballus (Horse), this protein is Glycophorin-A.